Here is a 324-residue protein sequence, read N- to C-terminus: Aldo-keto reductase family 1 member C15 (324 aa).

NADP(+) is bound by residues 24–26 (TFA) and Asp-51. Catalysis depends on Tyr-56, which acts as the Proton donor. His-118 is a binding site for substrate. Residues 167 to 168 (SN), Gln-191, 217 to 225 (YSALGSHRD), and 269 to 281 (LAKSFNEKRIKEN) each bind NADP(+).

This sequence belongs to the aldo/keto reductase family. Monomer. As to expression, expressed in lung, specifically in bronchiolar club cells, type II alveolar cells and epithelial cells of the duct of the bronchial gland (at protein level). Expressed in gastric parietal cells and in epithelial cells of the large intestine and colon (at protein level). Expressed in brown adipocytes (at protein level). Expressed in vascular endothelial cells (at protein level).

The protein localises to the cytoplasm. It carries out the reaction (2E,6E)-farnesol + NADP(+) = (2E,6E)-farnesal + NADPH + H(+). With respect to regulation, the dehydrogenase activity is inhibited by 3',3'',5',5''-tetraiodophenolphthalein, phenolphthalein, genistein, quercetin, zearalenone and diethylstilbestrol. Functionally, catalyzes the NADPH-dependent reduction of a variety of substrates including aromatic and aliphatic aldehydes, quinones, ketones, dicarbonyl compounds and 17-ketosteroids. Catalyzes the NADP(+)-dependent oxidation of aromatic, alicyclic and aliphatic alcohols, and 17beta-hydroxysteroids. To a lesser extent, can also catalyze the reduction of some aldoses and ketoses and the oxidation of some sugar alcohols. In the stomach, lung and colon tissues, mediates the reduction of farnesal and geranylgeranial into farnesol and geranylgeraniol respectively. By reducing 4-hydroxy-2-nonenal (HNE), produced during lipid peroxidation, into 1,4-dihydro-2-nonene (DHN), protects vascular endothelial cells from damage elicited by oxidized lipoproteins. This Rattus norvegicus (Rat) protein is Aldo-keto reductase family 1 member C15.